The following is a 712-amino-acid chain: Matrix metalloproteinase-9 (712 aa).

Residues 1–19 (MSPLQPLVLALLVLACCSA) form the signal peptide. Positions 20–106 (VPRRRQPTVV…PRCGVPDVGR (87 aa)) are cleaved as a propeptide — activation peptide. N-linked (GlcNAc...) asparagine glycosylation occurs at Asn38. The short motif at 97 to 104 (PRCGVPDV) is the Cysteine switch element. Cys99 is a Zn(2+) binding site. 2 N-linked (GlcNAc...) asparagine glycosylation sites follow: Asn120 and Asn127. Residues Asp131 and Asp165 each contribute to the Ca(2+) site. Zn(2+) is bound by residues His175 and Asp177. Ca(2+) is bound by residues Asp182, Gly183, Asn185, and Leu187. A Zn(2+)-binding site is contributed by His190. Ca(2+) is bound by residues Gly197, Gln199, and Asp201. His203 lines the Zn(2+) pocket. Asp205, Asp206, and Glu208 together coordinate Ca(2+). 3 consecutive Fibronectin type-II domains span residues 225-273 (AKGA…FCPS), 283-331 (ADGK…FCPT), and 342-390 (AAGE…FCPD). Disulfide bonds link Cys230-Cys256, Cys244-Cys271, Cys288-Cys314, Cys302-Cys329, Cys347-Cys373, and Cys361-Cys388. His401 contacts Zn(2+). Glu402 is a catalytic residue. Zn(2+)-binding residues include His405 and His411. Residues 440–519 (QHLYGPRPEP…PTESPDPAED (80 aa)) form a disordered region. Over residues 455-465 (TTTTTTTTEPQ) the composition is skewed to low complexity. Positions 491 to 504 (TGPPAAGPTGPPTA) are enriched in pro residues. Positions 505–514 (GPSAAPTESP) are enriched in low complexity. An intrachain disulfide couples Cys521 to Cys709. 4 Hemopexin repeats span residues 523–568 (VDIF…WPAL), 569–613 (PRKL…GLGP), 615–662 (VAQV…FPGV), and 663–709 (PIST…LLKC).

This sequence belongs to the peptidase M10A family. In terms of assembly, exists as monomer or homodimer; disulfide-linked. Also exists as heterodimer with LCN2. Macrophages and transformed cell lines produce only the monomeric form. Interacts with ECM1. It depends on Zn(2+) as a cofactor. Ca(2+) is required as a cofactor. In terms of processing, N- and O-glycosylated.

It localises to the secreted. Its subcellular location is the extracellular space. The protein resides in the extracellular matrix. It carries out the reaction Cleavage of gelatin types I and V and collagen types IV and V.. Its function is as follows. Matrix metalloproteinase that plays an essential role in local proteolysis of the extracellular matrix and in leukocyte migration. Could play a role in bone osteoclastic resorption. Cleaves KiSS1 at a Gly-|-Leu bond. Cleaves NINJ1 to generate the Secreted ninjurin-1 form. Cleaves type IV and type V collagen into large C-terminal three quarter fragments and shorter N-terminal one quarter fragments. Degrades fibronectin but not laminin or Pz-peptide. This chain is Matrix metalloproteinase-9, found in Bos taurus (Bovine).